The primary structure comprises 136 residues: Ribosome-binding factor A (136 aa).

Residues 116–136 (AGNHKASDEEESDDKGHEDEQ) form a disordered region.

It belongs to the RbfA family. Monomer. Binds 30S ribosomal subunits, but not 50S ribosomal subunits or 70S ribosomes.

It is found in the cytoplasm. In terms of biological role, one of several proteins that assist in the late maturation steps of the functional core of the 30S ribosomal subunit. Associates with free 30S ribosomal subunits (but not with 30S subunits that are part of 70S ribosomes or polysomes). Required for efficient processing of 16S rRNA. May interact with the 5'-terminal helix region of 16S rRNA. In Lachnoclostridium phytofermentans (strain ATCC 700394 / DSM 18823 / ISDg) (Clostridium phytofermentans), this protein is Ribosome-binding factor A.